A 311-amino-acid chain; its full sequence is Ornithine carbamoyltransferase (311 aa).

Carbamoyl phosphate is bound by residues Q85, R109, and 136 to 139; that span reads HPCQ. L-ornithine contacts are provided by residues N167, D231, and 235 to 236; that span reads SM. Residues 271–272 and R299 each bind carbamoyl phosphate; that span reads CL.

It belongs to the aspartate/ornithine carbamoyltransferase superfamily. OTCase family.

The protein localises to the cytoplasm. The catalysed reaction is carbamoyl phosphate + L-ornithine = L-citrulline + phosphate + H(+). It participates in amino-acid biosynthesis; L-arginine biosynthesis; L-arginine from L-ornithine and carbamoyl phosphate: step 1/3. Its function is as follows. Reversibly catalyzes the transfer of the carbamoyl group from carbamoyl phosphate (CP) to the N(epsilon) atom of ornithine (ORN) to produce L-citrulline. This is Ornithine carbamoyltransferase (argF) from Geobacillus stearothermophilus (Bacillus stearothermophilus).